The following is a 376-amino-acid chain: uncharacterized protein (376 aa).

Belongs to the mimivirus L17x/L18x family.

This is an uncharacterized protein from Acanthamoeba polyphaga (Amoeba).